Here is a 220-residue protein sequence, read N- to C-terminus: Probable GTP-binding protein EngB (220 aa).

The region spanning 26–200 (EGIEIAFAGR…RAKLDEWYAP (175 aa)) is the EngB-type G domain. GTP is bound by residues 34–41 (GRSNTGKS), 61–65 (GRTQL), 79–82 (DLPG), 146–149 (TKAD), and 179–181 (FSS). 2 residues coordinate Mg(2+): Ser-41 and Thr-63.

Belongs to the TRAFAC class TrmE-Era-EngA-EngB-Septin-like GTPase superfamily. EngB GTPase family. Requires Mg(2+) as cofactor.

Functionally, necessary for normal cell division and for the maintenance of normal septation. The chain is Probable GTP-binding protein EngB from Vibrio cholerae serotype O1 (strain ATCC 39541 / Classical Ogawa 395 / O395).